Reading from the N-terminus, the 343-residue chain is Ribosomal RNA small subunit methyltransferase C (343 aa).

It belongs to the methyltransferase superfamily. RsmC family. Monomer.

Its subcellular location is the cytoplasm. The enzyme catalyses guanosine(1207) in 16S rRNA + S-adenosyl-L-methionine = N(2)-methylguanosine(1207) in 16S rRNA + S-adenosyl-L-homocysteine + H(+). Functionally, specifically methylates the guanine in position 1207 of 16S rRNA in the 30S particle. The chain is Ribosomal RNA small subunit methyltransferase C from Escherichia coli (strain K12 / DH10B).